Consider the following 572-residue polypeptide: Oxygen-dependent choline dehydrogenase (572 aa).

9–38 (DYVIIGGGSAGSVLGARLSEDKDKNVLVLE) serves as a coordination point for FAD. H477 (proton acceptor) is an active-site residue.

This sequence belongs to the GMC oxidoreductase family. FAD serves as cofactor.

The enzyme catalyses choline + A = betaine aldehyde + AH2. It carries out the reaction betaine aldehyde + NAD(+) + H2O = glycine betaine + NADH + 2 H(+). The protein operates within amine and polyamine biosynthesis; betaine biosynthesis via choline pathway; betaine aldehyde from choline (cytochrome c reductase route): step 1/1. Its function is as follows. Involved in the biosynthesis of the osmoprotectant glycine betaine. Catalyzes the oxidation of choline to betaine aldehyde and betaine aldehyde to glycine betaine at the same rate. The chain is Oxygen-dependent choline dehydrogenase from Staphylococcus epidermidis (strain ATCC 35984 / DSM 28319 / BCRC 17069 / CCUG 31568 / BM 3577 / RP62A).